Consider the following 69-residue polypeptide: Cecropin-like peptide 1 (69 aa).

The first 23 residues, 1–23 (MNFTKLFVVFAVVLVAFAGQSEA), serve as a signal peptide directing secretion. Glutamine 68 is modified (glutamine amide).

In terms of tissue distribution, following bacterial infection, expressed in fat body, trachea and muscle.

The protein localises to the secreted. In terms of biological role, antimicrobial peptide active against Gram-negative bacteria E.coli KCCM 11234 (MIC&lt;=1.03 uM), E.aerogenes KCCM 12177 (MIC&lt;=2.07 uM) and P.aeruginosa KCCM 11328 (MIC&lt;=2.07 uM). Not active against various Gram-positive bacteria at concentrations up to 4.14 uM. The sequence is that of Cecropin-like peptide 1 from Hermetia illucens (Black soldier fly).